The following is a 441-amino-acid chain: Chromosomal replication initiator protein DnaA (441 aa).

Residues 1–71 are domain I, interacts with DnaA modulators; the sequence is MDIRWEEILE…AVYQVVGDRF (71 aa). The interval 71 to 99 is domain II; sequence FKVSILTESETSSHVLKEVIQSKFDDSDS. The tract at residues 100–318 is domain III, AAA+ region; that stretch reads DLNPEYIFSN…GIVNDLVMYK (219 aa). ATP is bound by residues glycine 143, glycine 145, lysine 146, and threonine 147. Positions 319–441 are domain IV, binds dsDNA; it reads KAYEYFLLTE…HTIKHKISFQ (123 aa).

Belongs to the DnaA family. As to quaternary structure, oligomerizes as a right-handed, spiral filament on DNA at oriC.

The protein localises to the cytoplasm. In terms of biological role, plays an essential role in the initiation and regulation of chromosomal replication. ATP-DnaA binds to the origin of replication (oriC) to initiate formation of the DNA replication initiation complex once per cell cycle. Binds the DnaA box (a 9 base pair repeat at the origin) and separates the double-stranded (ds)DNA. Forms a right-handed helical filament on oriC DNA; dsDNA binds to the exterior of the filament while single-stranded (ss)DNA is stabiized in the filament's interior. The ATP-DnaA-oriC complex binds and stabilizes one strand of the AT-rich DNA unwinding element (DUE), permitting loading of DNA polymerase. After initiation quickly degrades to an ADP-DnaA complex that is not apt for DNA replication. Binds acidic phospholipids. The chain is Chromosomal replication initiator protein DnaA from Leptospira biflexa serovar Patoc (strain Patoc 1 / Ames).